Here is a 662-residue protein sequence, read N- to C-terminus: Transforming growth factor beta activator LRRC32 (662 aa).

Positions 1–17 (MRPQILLLLALLTLGLA) are cleaved as a signal peptide. Residues 18 to 625 (AQRQDKVPCK…EDCEKGGLKN (608 aa)) lie on the Extracellular side of the membrane. The LRRNT domain occupies 21–48 (QDKVPCKMVDKKVSCQGLGLLQVPSVLP). LRR repeat units follow at residues 50 to 73 (DTET…GFYT), 74 to 95 (ALRH…AFQA), 98 to 119 (HLEH…SAGG), 125 to 145 (RVTS…ERLL), 150 to 171 (SLHT…TFRD), 174 to 195 (VLEQ…AFEG), 198 to 219 (RLTH…SLQQ), 220 to 240 (LRVL…SQPQ), 244 to 265 (QLTW…AALP), and 266 to 286 (RLIY…PPQD). N203 is a glycosylation site (N-linked (GlcNAc...) asparagine). 2 N-linked (GlcNAc...) asparagine glycosylation sites follow: N271 and N308. 10 LRR repeats span residues 316–339 (QLLN…EHLT), 340–361 (SLCF…RSGS), 364–385 (CLML…ARAL), 387–408 (SLRT…TFAN), 411–432 (SLQR…DEPG), 444–465 (SLHS…AFLH), 467–488 (PLTE…ALGG), 492–513 (SLEV…LPCF), 515–536 (CLKR…TQAV), and 537–558 (SLEV…AMGG). N-linked (GlcNAc...) asparagine glycosylation is present at N345. An N-linked (GlcNAc...) asparagine glycan is attached at N545. The LRRCT domain occupies 571-620 (NPLSCCGNGWLAAQLHQGRVDVDATQDLICRFSSQEEVSLSHVRPEDCEK). The helical transmembrane segment at 626–646 (INLIIILTFILVSAILLTTLA) threads the bilayer. Residues 647–662 (TCCCVRRQKFNQQYKA) lie on the Cytoplasmic side of the membrane.

This sequence belongs to the LRRC32/LRRC33 family. As to quaternary structure, interacts with TGFB1; associates via disulfide bonds with the Latency-associated peptide chain (LAP) regulatory chain of TGFB1, leading to regulate activation of TGF-beta-1. Interacts with TGFB2. Interacts with TGFB3; associates via disulfide bonds with the Latency-associated peptide chain (LAP) regulatory chain of TGFB3, leading to regulate activation of TGF-beta-3. Interacts with LAPTM4B; decreases TGFB1 production in regulatory T-cells.

It is found in the cell membrane. Its subcellular location is the cell surface. In terms of biological role, key regulator of transforming growth factor beta (TGFB1, TGFB2 and TGFB3) that controls TGF-beta activation by maintaining it in a latent state during storage in extracellular space. Associates specifically via disulfide bonds with the Latency-associated peptide (LAP), which is the regulatory chain of TGF-beta, and regulates integrin-dependent activation of TGF-beta. Able to outcompete LTBP1 for binding to LAP regulatory chain of TGF-beta. Controls activation of TGF-beta-1 (TGFB1) on the surface of activated regulatory T-cells (Tregs). Required for epithelial fusion during palate development by regulating activation of TGF-beta-3 (TGFB3). This is Transforming growth factor beta activator LRRC32 from Pongo abelii (Sumatran orangutan).